A 186-amino-acid polypeptide reads, in one-letter code: ATP synthase subunit delta (186 aa).

Belongs to the ATPase delta chain family. F-type ATPases have 2 components, F(1) - the catalytic core - and F(0) - the membrane proton channel. F(1) has five subunits: alpha(3), beta(3), gamma(1), delta(1), epsilon(1). F(0) has three main subunits: a(1), b(2) and c(10-14). The alpha and beta chains form an alternating ring which encloses part of the gamma chain. F(1) is attached to F(0) by a central stalk formed by the gamma and epsilon chains, while a peripheral stalk is formed by the delta and b chains.

The protein resides in the cell membrane. Its function is as follows. F(1)F(0) ATP synthase produces ATP from ADP in the presence of a proton or sodium gradient. F-type ATPases consist of two structural domains, F(1) containing the extramembraneous catalytic core and F(0) containing the membrane proton channel, linked together by a central stalk and a peripheral stalk. During catalysis, ATP synthesis in the catalytic domain of F(1) is coupled via a rotary mechanism of the central stalk subunits to proton translocation. This protein is part of the stalk that links CF(0) to CF(1). It either transmits conformational changes from CF(0) to CF(1) or is implicated in proton conduction. The protein is ATP synthase subunit delta of Mycoplasmopsis agalactiae (strain NCTC 10123 / CIP 59.7 / PG2) (Mycoplasma agalactiae).